Here is a 95-residue protein sequence, read N- to C-terminus: Large ribosomal subunit protein eL37y (95 aa).

Zn(2+)-binding residues include Cys19, Cys22, Cys34, and Cys37. The C4-type zinc-finger motif lies at 19–37 (CVRCGRRSFHIQKSRCSAC).

Belongs to the eukaryotic ribosomal protein eL37 family. Requires Zn(2+) as cofactor.

Functionally, binds to the 23S rRNA. The chain is Large ribosomal subunit protein eL37y (RPL37B) from Arabidopsis thaliana (Mouse-ear cress).